The primary structure comprises 294 residues: tRNA dimethylallyltransferase (294 aa).

An ATP-binding site is contributed by G11–T18. A substrate-binding site is contributed by T13–T18. The tract at residues D36–Q39 is interaction with substrate tRNA.

It belongs to the IPP transferase family. As to quaternary structure, monomer. Mg(2+) serves as cofactor.

It carries out the reaction adenosine(37) in tRNA + dimethylallyl diphosphate = N(6)-dimethylallyladenosine(37) in tRNA + diphosphate. Its function is as follows. Catalyzes the transfer of a dimethylallyl group onto the adenine at position 37 in tRNAs that read codons beginning with uridine, leading to the formation of N6-(dimethylallyl)adenosine (i(6)A). In Lactococcus lactis subsp. cremoris (strain MG1363), this protein is tRNA dimethylallyltransferase.